A 136-amino-acid chain; its full sequence is Snaclec rhodocytin subunit alpha (136 aa).

3 disulfides stabilise this stretch: cysteine 5–cysteine 16, cysteine 33–cysteine 131, and cysteine 106–cysteine 123. Residues tyrosine 12–lysine 132 enclose the C-type lectin domain.

It belongs to the snaclec family. In terms of assembly, dimer (non-covalently linked) of heterodimers of subunits alpha and beta (disulfide-linked). As to expression, expressed by the venom gland.

Its subcellular location is the secreted. Its function is as follows. Elicits platelet aggregation by the binding to the C-type lectin domain family 1 member B (CLEC1B/CLEC2). Binding leads to tyrosine phosphorylation in the cytoplasmic tail of CLEC1B, which promotes the binding of spleen tyrosine kinase (Syk), subsequent activation of PLC-gamma-2, and platelet activation and aggregation. Binding to GPIbalpha (GP1BA) and alpha-2/beta-1 (ITGA2/ITGB1) may also induce aggregation, but this is controversial. This is Snaclec rhodocytin subunit alpha from Calloselasma rhodostoma (Malayan pit viper).